The sequence spans 384 residues: Outer membrane protein assembly factor BamB (384 aa).

A signal peptide spans 1–16; the sequence is MKIRILVLILCALTQG. Cys17 is lipidated: N-palmitoyl cysteine. Residue Cys17 is the site of S-diacylglycerol cysteine attachment.

This sequence belongs to the BamB family. In terms of assembly, part of the Bam complex.

The protein resides in the cell outer membrane. Its function is as follows. Part of the outer membrane protein assembly complex, which is involved in assembly and insertion of beta-barrel proteins into the outer membrane. The protein is Outer membrane protein assembly factor BamB of Legionella pneumophila (strain Paris).